We begin with the raw amino-acid sequence, 137 residues long: Large ribosomal subunit protein uL16 (137 aa).

It belongs to the universal ribosomal protein uL16 family. Part of the 50S ribosomal subunit.

Functionally, binds 23S rRNA and is also seen to make contacts with the A and possibly P site tRNAs. The sequence is that of Large ribosomal subunit protein uL16 from Rhodopseudomonas palustris (strain HaA2).